The sequence spans 929 residues: MTDYSKTVNLLESPFPMRGNLAKREPAWLKSWYEQKRYQKLREIAKGRPKFILHDGPPYANGDIHIGHAVNKILKDIIIRSKTQAGFDAPYVPGWDCHGLPIEVMVEKLHGKDMPKARFRELCREYAAEQIARQKKDFIRLGVLGDWDNPYLTMDFKTEADTVRMLGEIYKSGYLYRGAKPVQFCLDCGSSLAEAEVEYKDKVSPAIDVAYPFKNTVALAAAFGLAGIEGKAFAVIWTTTPWTLPASQAVSAGADVVYQLIDTPKGKLVLAKDLAEGALKRYGFSDGIAILAETTGDKLENLHMNHPFLERDIPMLNGEHVTTDAGTGLVHTAPAHGLEDYAVCNKYGIELYNPVNAEGKYISETPRVAGMSVWEANPVILQWPEETGNLLASSKIEHSYAHCWRHKTPLIYRATGQWFVGMDKAGSDGKTLRDKAIKAVDDTEFFPPWGRARLESMIEGRPDWVVSRQRYWGTPMTFFVHKETGELHPNSAELLEKVAQRIEEKGIEAWFSLDKSELLSAEDCEHYDKLPDTMDVWFDSGSTHYSVVKQREELEWPADLYLEGSDQHRGWFQSSMLTGCASSMGRAPYKQLLTHGFVVDQNGRKMSKSIGNVVAPQEVYNEFGADILRLWAASTDYSGELAISKEILKRVTESYRRIRNTLSFLFANLSDFNPIEDAVQQADMVEIDRYALVLARRLQERLAGGYYPRYAFHFAVKDIVSFCSEDLGAFYLDILKDRLYTTKADSRARRSAQTALYHITRSLVLLIAPILCFTGEEAWDIIGGGEEDSVLFHTWHEFPAINEKAEAELVKKWTAIREAREAVTAAIEPLRADKTVGSSLQAEAEITAPEEMAGYLNALGEELRFALLVSKAEVKVGDELAVAAKASDGEKCERCWHYTRDVGAVAGYETVCKRCAENVGGEGETRHYA.

A 'HIGH' region motif is present at residues 58-68 (PYANGDIHIGH). Glutamate 563 is a binding site for L-isoleucyl-5'-AMP. A 'KMSKS' region motif is present at residues 605–609 (KMSKS). An ATP-binding site is contributed by lysine 608. Zn(2+)-binding residues include cysteine 892, cysteine 895, cysteine 912, and cysteine 915.

This sequence belongs to the class-I aminoacyl-tRNA synthetase family. IleS type 1 subfamily. Monomer. It depends on Zn(2+) as a cofactor.

It is found in the cytoplasm. It catalyses the reaction tRNA(Ile) + L-isoleucine + ATP = L-isoleucyl-tRNA(Ile) + AMP + diphosphate. Functionally, catalyzes the attachment of isoleucine to tRNA(Ile). As IleRS can inadvertently accommodate and process structurally similar amino acids such as valine, to avoid such errors it has two additional distinct tRNA(Ile)-dependent editing activities. One activity is designated as 'pretransfer' editing and involves the hydrolysis of activated Val-AMP. The other activity is designated 'posttransfer' editing and involves deacylation of mischarged Val-tRNA(Ile). This chain is Isoleucine--tRNA ligase, found in Neisseria gonorrhoeae (strain ATCC 700825 / FA 1090).